The sequence spans 125 residues: Small ribosomal subunit protein uS12 (125 aa).

The disordered stretch occupies residues 1 to 31 (MPTINQLVRHGRQTEVTKSKSPAMQGGPQRR). Residue Asp89 is modified to 3-methylthioaspartic acid. The tract at residues 105-125 (QGVKDRKQSRSKYGAKRPKKA) is disordered. Positions 113–125 (SRSKYGAKRPKKA) are enriched in basic residues.

This sequence belongs to the universal ribosomal protein uS12 family. Part of the 30S ribosomal subunit. Contacts proteins S8 and S17. May interact with IF1 in the 30S initiation complex.

With S4 and S5 plays an important role in translational accuracy. In terms of biological role, interacts with and stabilizes bases of the 16S rRNA that are involved in tRNA selection in the A site and with the mRNA backbone. Located at the interface of the 30S and 50S subunits, it traverses the body of the 30S subunit contacting proteins on the other side and probably holding the rRNA structure together. The combined cluster of proteins S8, S12 and S17 appears to hold together the shoulder and platform of the 30S subunit. This is Small ribosomal subunit protein uS12 from Methylibium petroleiphilum (strain ATCC BAA-1232 / LMG 22953 / PM1).